The primary structure comprises 312 residues: Olfactory receptor 2M5 (312 aa).

The Extracellular portion of the chain corresponds to 1 to 25 (MAWENQTFNSDFILLGIFNHSPTHT). Residue Asn-5 is glycosylated (N-linked (GlcNAc...) asparagine). The chain crosses the membrane as a helical span at residues 26 to 49 (FLFFLVLAIFSVAFMGNSVMVLLI). Topologically, residues 50 to 57 (YLDTQLHT) are cytoplasmic. Residues 58–79 (PMYFLLSQLFLMDLMLICSTVP) form a helical membrane-spanning segment. The Extracellular segment spans residues 80–100 (KMAFNYLSGSKSISMAGCATQ). Cys-97 and Cys-189 are oxidised to a cystine. A helical membrane pass occupies residues 101–120 (IFFYVSLLGSECFLLAVMSY). The Cytoplasmic portion of the chain corresponds to 121 to 139 (DRYIAICHPLRYTNLMRPK). The helical transmembrane segment at 140-158 (ICGLMTAFSWILGSMDAII) threads the bilayer. Topologically, residues 159–195 (DAVATFSFSYCGSREIAHFFCDFPSLLILSCNDTSIF) are extracellular. A helical membrane pass occupies residues 196 to 219 (EKVLFICCIVMIVFPVAIIIASYA). Residues 220–236 (RVILAVIHMGSGEGRRK) are Cytoplasmic-facing. Residues 237-259 (AFTTCSSHLMVVGMYYGAGLFMY) traverse the membrane as a helical segment. Residues 260 to 272 (IRPTSDRSPMQDK) lie on the Extracellular side of the membrane. A helical transmembrane segment spans residues 273 to 292 (LVSVFYTILTPMLNPLIYSL). At 293–311 (RNKEVTRALRKVLGKGKCG) the chain is on the cytoplasmic side.

Belongs to the G-protein coupled receptor 1 family.

Its subcellular location is the cell membrane. Its function is as follows. Odorant receptor. This chain is Olfactory receptor 2M5 (OR2M5), found in Homo sapiens (Human).